We begin with the raw amino-acid sequence, 22 residues long: uncharacterized protein (22 aa).

Residues 1–22 (MHNSIAYDKDGNSTGQKYYAYG) are disordered.

This is an uncharacterized protein from Lactobacillus helveticus (Lactobacillus suntoryeus).